The primary structure comprises 217 residues: Large ribosomal subunit protein uL3 (217 aa).

Residues 127-162 (GFSRGPMSHGSKNHRAPGSTGAGTTPGRIYPGKRMA) are disordered. Over residues 142–153 (APGSTGAGTTPG) the composition is skewed to low complexity.

It belongs to the universal ribosomal protein uL3 family. In terms of assembly, part of the 50S ribosomal subunit. Forms a cluster with proteins L14 and L19.

Functionally, one of the primary rRNA binding proteins, it binds directly near the 3'-end of the 23S rRNA, where it nucleates assembly of the 50S subunit. The sequence is that of Large ribosomal subunit protein uL3 from Prochlorococcus marinus (strain MIT 9301).